The primary structure comprises 131 residues: D-ribose pyranase (131 aa).

The Proton donor role is filled by His20. Substrate-binding positions include Asp28, His98, and 120–122 (YAN).

Belongs to the RbsD / FucU family. RbsD subfamily. As to quaternary structure, homodecamer.

It localises to the cytoplasm. The enzyme catalyses beta-D-ribopyranose = beta-D-ribofuranose. The protein operates within carbohydrate metabolism; D-ribose degradation; D-ribose 5-phosphate from beta-D-ribopyranose: step 1/2. Catalyzes the interconversion of beta-pyran and beta-furan forms of D-ribose. The chain is D-ribose pyranase from Bacillus anthracis (strain A0248).